A 584-amino-acid polypeptide reads, in one-letter code: 2-isopropylmalate synthase (584 aa).

Residues Pro45 to Asp323 enclose the Pyruvate carboxyltransferase domain. Residues Asp54, His262, His264, and Asn298 each coordinate a divalent metal cation.

The protein belongs to the alpha-IPM synthase/homocitrate synthase family. LeuA type 2 subfamily. As to quaternary structure, homodimer. The cofactor is a divalent metal cation.

It carries out the reaction 3-methyl-2-oxobutanoate + acetyl-CoA + H2O = (2S)-2-isopropylmalate + CoA + H(+). The protein operates within amino-acid biosynthesis; L-leucine biosynthesis; L-leucine from 3-methyl-2-oxobutanoate: step 1/4. Functionally, catalyzes the condensation of the acetyl group of acetyl-CoA with 3-methyl-2-oxobutanoate (2-oxoisovalerate) to form 3-carboxy-3-hydroxy-4-methylpentanoate (2-isopropylmalate). The chain is 2-isopropylmalate synthase (leu3) from Schizosaccharomyces pombe (strain 972 / ATCC 24843) (Fission yeast).